The chain runs to 387 residues: Phosphoglycerate kinase (387 aa).

Substrate-binding positions include 21-23, arginine 36, and 59-62; these read DLN and HLGR. Lysine 84 is subject to N6-acetyllysine. Residues arginine 113 and arginine 146 each coordinate substrate. Residues lysine 197, glutamate 314, and 340–343 each bind ATP; that span reads GGDT.

Belongs to the phosphoglycerate kinase family. As to quaternary structure, monomer.

The protein localises to the cytoplasm. The enzyme catalyses (2R)-3-phosphoglycerate + ATP = (2R)-3-phospho-glyceroyl phosphate + ADP. It participates in carbohydrate degradation; glycolysis; pyruvate from D-glyceraldehyde 3-phosphate: step 2/5. The protein is Phosphoglycerate kinase of Escherichia coli O9:H4 (strain HS).